A 113-amino-acid polypeptide reads, in one-letter code: Putative membrane protein insertion efficiency factor (113 aa).

The protein belongs to the UPF0161 family.

It localises to the cell inner membrane. In terms of biological role, could be involved in insertion of integral membrane proteins into the membrane. The protein is Putative membrane protein insertion efficiency factor of Campylobacter concisus (strain 13826).